A 323-amino-acid chain; its full sequence is Cobalamin biosynthesis protein CobD (323 aa).

5 helical membrane-spanning segments follow: residues 52–72 (IAGV…TWLM), 73–93 (VWGS…LLSS), 154–174 (DGII…GMAF), 214–234 (ALLM…AASI), and 294–314 (IRLM…TAAL).

It belongs to the CobD/CbiB family.

The protein resides in the cell membrane. The protein operates within cofactor biosynthesis; adenosylcobalamin biosynthesis. Converts cobyric acid to cobinamide by the addition of aminopropanol on the F carboxylic group. This Pelobacter propionicus (strain DSM 2379 / NBRC 103807 / OttBd1) protein is Cobalamin biosynthesis protein CobD.